We begin with the raw amino-acid sequence, 132 residues long: Ribosome-binding factor A (132 aa).

Belongs to the RbfA family. Monomer. Binds 30S ribosomal subunits, but not 50S ribosomal subunits or 70S ribosomes.

The protein localises to the cytoplasm. In terms of biological role, one of several proteins that assist in the late maturation steps of the functional core of the 30S ribosomal subunit. Associates with free 30S ribosomal subunits (but not with 30S subunits that are part of 70S ribosomes or polysomes). Required for efficient processing of 16S rRNA. May interact with the 5'-terminal helix region of 16S rRNA. The protein is Ribosome-binding factor A of Pseudomonas putida (strain GB-1).